Consider the following 368-residue polypeptide: MKAVVIEDGKAVVKEGVPIPELEEGFVLIKTLAVAGNPTDWAHIDYKVGPQGSILGCDAAGQIVKLGPAVDPKDFSIGDYIYGFIHGSSVRFPSNGAFAEYSAISTVVAYKSPNELKFLGEDVLPAGPVRSLEGAATIPVSLTTAGLVLTYNLGLNLKWEPSTPQRNGPILLWGGATAVGQSLIQLANKLNGFTKIIVVASRKHEKLLKEYGADQLFDYHDIDVVEQIKHKYNNISYLVDCVANQNTLQQVYKCAADKQDATVVELTNLTEENVKKENRRQNVTIDRTRLYSIGGHEVPFGGITFPADPEARRAATEFVKFINPKISDGQIHHIPARVYKNGLYDVPRILEDIKIGKNSGEKLVAVLN.

It belongs to the YCR102c/YLR460c/YNL134c family.

This is an uncharacterized protein from Saccharomyces cerevisiae (strain ATCC 204508 / S288c) (Baker's yeast).